The primary structure comprises 596 residues: Bromodomain-containing protein 9 (596 aa).

Positions 1–10 are enriched in basic residues; the sequence is MGKKHKKHKS. Disordered regions lie at residues 1–31 and 49–119; these read MGKKHKKHKSEWRSYDAGELGSPGDQSQYYV and EVTE…SEGE. A compositionally biased stretch (basic and acidic residues) spans 61–73; the sequence is SFYEDRSDHERER. Residues 74–84 are compositionally biased toward basic residues; sequence HKEKKKKKKKK. Residues 85–98 are compositionally biased toward basic and acidic residues; the sequence is SEKEKDKYLDEDER. Positions 99–109 are enriched in basic residues; sequence RRRKEEKKRKR. The Bromo domain occupies 148–252; sequence NESTPLQQLL…HTGFKMMSKQ (105 aa). Positions 226–228 are histone H4K5ac H4K8ac and histone H4K5bu H4K8bu binding; it reads TYN. Basic and acidic residues predominate over residues 537-547; the sequence is DFHDVHNDRGG. The segment at 537–596 is disordered; it reads DFHDVHNDRGGSRPSSSSSVSNNSERDHHLGSPSRISVGEQQDIHDPYEFLQSPETENQN. The span at 548–559 shows a compositional bias: low complexity; the sequence is SRPSSSSSVSNN.

Binds acetylated histones H3 and H4. Binds butyrylated histone H4.

The protein resides in the nucleus. Functionally, plays a role in chromatin remodeling and regulation of transcription. Acts as a chromatin reader that recognizes and binds acylated histones: binds histones that are acetylated and/or butyrylated. The chain is Bromodomain-containing protein 9 (brd9) from Xenopus tropicalis (Western clawed frog).